Reading from the N-terminus, the 197-residue chain is uncharacterized protein (197 aa).

The signal sequence occupies residues Met-1–Ala-23. Topologically, residues Ser-24 to Thr-61 are extracellular. N-linked (GlcNAc...) asparagine glycosylation occurs at Asn-26. A helical transmembrane segment spans residues Leu-62–Phe-82. The Cytoplasmic portion of the chain corresponds to His-83 to Ser-197. The disordered stretch occupies residues Met-94–Ser-180. 2 stretches are compositionally biased toward basic and acidic residues: residues Arg-96 to Ser-107 and His-125 to Arg-136. A compositionally biased stretch (low complexity) spans Cys-141–Pro-161. A compositionally biased stretch (pro residues) spans Cys-162–Ser-171.

It is found in the membrane. This is an uncharacterized protein from Homo sapiens (Human).